Here is a 393-residue protein sequence, read N- to C-terminus: S-adenosylmethionine synthase (393 aa).

An ATP-binding site is contributed by His-17. Asp-19 is a Mg(2+) binding site. Glu-45 provides a ligand contact to K(+). The L-methionine site is built by Glu-58 and Gln-106. The flexible loop stretch occupies residues 106-116; the sequence is QSAHIAQGVDA. Residues 171 to 173, Asp-246, 252 to 253, Ala-269, and Lys-273 each bind ATP; these read DAK and RK. An L-methionine-binding site is contributed by Asp-246. Lys-277 serves as a coordination point for L-methionine.

It belongs to the AdoMet synthase family. In terms of assembly, homotetramer; dimer of dimers. The cofactor is Mg(2+). It depends on K(+) as a cofactor.

It is found in the cytoplasm. The enzyme catalyses L-methionine + ATP + H2O = S-adenosyl-L-methionine + phosphate + diphosphate. Its pathway is amino-acid biosynthesis; S-adenosyl-L-methionine biosynthesis; S-adenosyl-L-methionine from L-methionine: step 1/1. Functionally, catalyzes the formation of S-adenosylmethionine (AdoMet) from methionine and ATP. The overall synthetic reaction is composed of two sequential steps, AdoMet formation and the subsequent tripolyphosphate hydrolysis which occurs prior to release of AdoMet from the enzyme. In Roseobacter denitrificans (strain ATCC 33942 / OCh 114) (Erythrobacter sp. (strain OCh 114)), this protein is S-adenosylmethionine synthase.